A 505-amino-acid polypeptide reads, in one-letter code: Cytochrome P450 monooxygenase FGM1 (505 aa).

An N-terminal signal peptide occupies residues 1–23 (MPLILSITSSGTVLVLLTLLSLA). N-linked (GlcNAc...) asparagine glycosylation is found at asparagine 188 and asparagine 351. Heme is bound at residue cysteine 450.

Belongs to the cytochrome P450 family. Heme serves as cofactor.

It participates in secondary metabolite biosynthesis. Its function is as follows. Cytochrome P450 monooxygenase; part of the Fg3_54/C64 gene cluster that mediates the biosynthesis of the octapeptide fusaoctaxin A, a virulence factor that is required for cell-to-cell invasiveness of plant host. The 2 nonribosomal peptide synthetases NRPS9 and NRPS5 form an assembly line which likely utilizes GABA as a starter unit (loaded on the unique module M1 of NRPS9) and sequentially incorporates seven extender units composed of the residues L-Ala, L-allo-Ile, L-Ser, L-Val, L-Ser, L-Leu and L-Leu, respectively. During the process, each of the residues that are tethered on modules M3-M7 of NRPS5 containing an E domain can undergo an epimerization reaction to produce a D-configuration before the transpeptidation reaction occurs. The elongation of the peptidyl chain might be terminated by module M8-mediated L-Leu incorporation, followed by R domain-catalyzed 4 electron reduction to release the resulting octapeptide from the assembly line as an alcohol. Fusaoctaxin A is cleaved by the cluster specific ABC transporter FGM5 to the pentapeptide fusapentaxin A and the tripeptide fusatrixin A. The other enzymes from the cluster, FGM1, FGM2, FGM3 and FGM9 seem not to be involved in the biosynthesis of fusaoctaxin A and their functions have still to be determined. This is Cytochrome P450 monooxygenase FGM1 from Gibberella zeae (strain ATCC MYA-4620 / CBS 123657 / FGSC 9075 / NRRL 31084 / PH-1) (Wheat head blight fungus).